The chain runs to 422 residues: L-cysteine:1D-myo-inositol 2-amino-2-deoxy-alpha-D-glucopyranoside ligase (422 aa).

The interval 1–34 (MKSWSTPAPPTVPSRPDRLRLHDTATGRTRHPGN) is disordered. Over residues 15 to 25 (RPDRLRLHDTA) the composition is skewed to basic and acidic residues. Cysteine 44 contributes to the Zn(2+) binding site. Residues 44–47 (CGIT), threonine 59, and 82–84 (NVT) contribute to the L-cysteinyl-5'-AMP site. Positions 46–56 (ITPYDATHLGH) match the 'HIGH' region motif. The short motif at 196–201 (ERGGDP) is the 'ERGGDP' region element. Residue tryptophan 237 participates in L-cysteinyl-5'-AMP binding. Cysteine 241 is a Zn(2+) binding site. 259-261 (GSD) serves as a coordination point for L-cysteinyl-5'-AMP. Histidine 266 is a binding site for Zn(2+). Position 292 (valine 292) interacts with L-cysteinyl-5'-AMP. The 'KMSKS' region signature appears at 298 to 302 (KMSKS).

Belongs to the class-I aminoacyl-tRNA synthetase family. MshC subfamily. Monomer. Zn(2+) is required as a cofactor.

The catalysed reaction is 1D-myo-inositol 2-amino-2-deoxy-alpha-D-glucopyranoside + L-cysteine + ATP = 1D-myo-inositol 2-(L-cysteinylamino)-2-deoxy-alpha-D-glucopyranoside + AMP + diphosphate + H(+). Functionally, catalyzes the ATP-dependent condensation of GlcN-Ins and L-cysteine to form L-Cys-GlcN-Ins. In Micrococcus luteus (strain ATCC 4698 / DSM 20030 / JCM 1464 / CCM 169 / CCUG 5858 / IAM 1056 / NBRC 3333 / NCIMB 9278 / NCTC 2665 / VKM Ac-2230) (Micrococcus lysodeikticus), this protein is L-cysteine:1D-myo-inositol 2-amino-2-deoxy-alpha-D-glucopyranoside ligase.